A 157-amino-acid chain; its full sequence is 6,7-dimethyl-8-ribityllumazine synthase (157 aa).

5-amino-6-(D-ribitylamino)uracil is bound by residues Phe-23, Ala-57–Glu-59, and Ala-81–Ile-83. Ser-86–Thr-87 is a binding site for (2S)-2-hydroxy-3-oxobutyl phosphate. His-89 functions as the Proton donor in the catalytic mechanism. Phe-114 is a 5-amino-6-(D-ribitylamino)uracil binding site. Arg-128 contacts (2S)-2-hydroxy-3-oxobutyl phosphate.

Belongs to the DMRL synthase family.

The catalysed reaction is (2S)-2-hydroxy-3-oxobutyl phosphate + 5-amino-6-(D-ribitylamino)uracil = 6,7-dimethyl-8-(1-D-ribityl)lumazine + phosphate + 2 H2O + H(+). It functions in the pathway cofactor biosynthesis; riboflavin biosynthesis; riboflavin from 2-hydroxy-3-oxobutyl phosphate and 5-amino-6-(D-ribitylamino)uracil: step 1/2. Functionally, catalyzes the formation of 6,7-dimethyl-8-ribityllumazine by condensation of 5-amino-6-(D-ribitylamino)uracil with 3,4-dihydroxy-2-butanone 4-phosphate. This is the penultimate step in the biosynthesis of riboflavin. The sequence is that of 6,7-dimethyl-8-ribityllumazine synthase from Desulfosudis oleivorans (strain DSM 6200 / JCM 39069 / Hxd3) (Desulfococcus oleovorans).